A 394-amino-acid chain; its full sequence is 4-hydroxybenzoate 3-monooxygenase (NAD(P)H) (394 aa).

Residues Glu32, 42–47 (TIRAGV), and Gln102 contribute to the FAD site. Substrate contacts are provided by residues Tyr203, 214-216 (STR), and Tyr224. Asp288 serves as a coordination point for FAD. Pro295 contacts substrate. 301-302 (LN) lines the FAD pocket.

The protein belongs to the aromatic-ring hydroxylase family. The cofactor is FAD.

It catalyses the reaction 4-hydroxybenzoate + NADH + O2 + H(+) = 3,4-dihydroxybenzoate + NAD(+) + H2O. The catalysed reaction is 4-hydroxybenzoate + NADPH + O2 + H(+) = 3,4-dihydroxybenzoate + NADP(+) + H2O. Involved in the degradation of 4-hydroxybenzoate (4HB) via the protocatechuate (PCA) 2,3-cleavage pathway. Catalyzes the conversion of 4HB into 2-hydroxypenta-2,4-dienoate (HPD). It is highly specific for 4-hydroxybenzoate, and is able to utilize both NADH and NADPH as electron donors at approximately equal rates. In Paenibacillus sp, this protein is 4-hydroxybenzoate 3-monooxygenase (NAD(P)H) (praI).